Reading from the N-terminus, the 177-residue chain is O-acetyl-ADP-ribose deacetylase (177 aa).

In terms of domain architecture, Macro spans Met1–Gly175. Residues Asp11 to Ile12, Asn25, Gly33 to Asp35, and Ser122 to Tyr126 each bind substrate. Residue Asp35 is the Proton acceptor of the active site.

This sequence belongs to the MacroD-type family. YmdB subfamily. Homodimer. Interacts with RNase III.

The enzyme catalyses 3''-O-acetyl-ADP-D-ribose + H2O = ADP-D-ribose + acetate + H(+). The catalysed reaction is 2''-O-acetyl-ADP-D-ribose + H2O = ADP-D-ribose + acetate + H(+). In terms of biological role, deacetylates O-acetyl-ADP ribose to yield ADP-ribose and free acetate. Down-regulates ribonuclease 3 (RNase III) activity. Acts by interacting directly with the region of the ribonuclease that is required for dimerization/activation. This chain is O-acetyl-ADP-ribose deacetylase, found in Citrobacter koseri (strain ATCC BAA-895 / CDC 4225-83 / SGSC4696).